Reading from the N-terminus, the 260-residue chain is MKPIDLQAENSTETVGRSLRRRPLARKKLSDMVEEELEQMIRRQEFAQGEQLPSERELMEFFNVGRPSVREALAALKRKGLVQINNGERARVSMPSADTIIGELSGMAKDFLTQPGGITHFEQLRLFFESSLVRYAAEFATDEQVESLSKALEINSQSLSDNALFIRSDVDFHRVLAEIPGNPIFMAIHVALLDWLIAARPKVSDAELYEHNNVSYRQHIAIVDAIRRHDPDEADRALQSHLNSVSATWHAFGQGSKKKK.

Residues 27 to 95 (KKLSDMVEEE…NGERARVSMP (69 aa)) enclose the HTH gntR-type domain. Positions 55–74 (ERELMEFFNVGRPSVREALA) form a DNA-binding region, H-T-H motif.

The protein belongs to the NanR family.

Its function is as follows. Transcriptional repressor that controls expression of the genes required for the catabolism of sialic acids. The polypeptide is HTH-type transcriptional repressor NanR (Enterobacter sp. (strain 638)).